The chain runs to 101 residues: Large ribosomal subunit protein uL23 (101 aa).

The protein belongs to the universal ribosomal protein uL23 family. Part of the 50S ribosomal subunit. Contacts protein L29, and trigger factor when it is bound to the ribosome.

In terms of biological role, one of the early assembly proteins it binds 23S rRNA. One of the proteins that surrounds the polypeptide exit tunnel on the outside of the ribosome. Forms the main docking site for trigger factor binding to the ribosome. This chain is Large ribosomal subunit protein uL23, found in Nocardia farcinica (strain IFM 10152).